A 381-amino-acid chain; its full sequence is Carbamoyl phosphate synthase small chain (381 aa).

Residues 1–192 (MSKPAILALE…SGYADVSQGD (192 aa)) form a CPSase region. Residues Ser47, Gly244, and Gly246 each contribute to the L-glutamine site. The Glutamine amidotransferase type-1 domain occupies 196 to 381 (HVVAYDYGMK…RFVEMMRHRR (186 aa)). The Nucleophile role is filled by Cys272. Residues Leu273, Gln276, Asn314, Gly316, and Phe317 each contribute to the L-glutamine site. Residues His356 and Glu358 contribute to the active site.

The protein belongs to the CarA family. Composed of two chains; the small (or glutamine) chain promotes the hydrolysis of glutamine to ammonia, which is used by the large (or ammonia) chain to synthesize carbamoyl phosphate. Tetramer of heterodimers (alpha,beta)4.

The enzyme catalyses hydrogencarbonate + L-glutamine + 2 ATP + H2O = carbamoyl phosphate + L-glutamate + 2 ADP + phosphate + 2 H(+). The catalysed reaction is L-glutamine + H2O = L-glutamate + NH4(+). It functions in the pathway amino-acid biosynthesis; L-arginine biosynthesis; carbamoyl phosphate from bicarbonate: step 1/1. It participates in pyrimidine metabolism; UMP biosynthesis via de novo pathway; (S)-dihydroorotate from bicarbonate: step 1/3. In terms of biological role, small subunit of the glutamine-dependent carbamoyl phosphate synthetase (CPSase). CPSase catalyzes the formation of carbamoyl phosphate from the ammonia moiety of glutamine, carbonate, and phosphate donated by ATP, constituting the first step of 2 biosynthetic pathways, one leading to arginine and/or urea and the other to pyrimidine nucleotides. The small subunit (glutamine amidotransferase) binds and cleaves glutamine to supply the large subunit with the substrate ammonia. The chain is Carbamoyl phosphate synthase small chain from Halomonas eurihalina.